Here is a 424-residue protein sequence, read N- to C-terminus: GTPase Obg (424 aa).

The Obg domain occupies 1–158; the sequence is MFIDTAKIFV…RWIKLELKLL (158 aa). The OBG-type G domain maps to 159 to 331; that stretch reads ADVGLIGFPN…LMKEAARLLS (173 aa). Residues 165 to 172, 190 to 194, 212 to 215, 282 to 285, and 312 to 314 each bind GTP; these read GFPNVGKS, FTTLK, DIPG, NKSD, and SAA. The Mg(2+) site is built by Ser172 and Thr192. Residues 345–424 enclose the OCT domain; the sequence is RFIEEEKRFT…LNDFEFDFLL (80 aa).

This sequence belongs to the TRAFAC class OBG-HflX-like GTPase superfamily. OBG GTPase family. Monomer. It depends on Mg(2+) as a cofactor.

It localises to the cytoplasm. In terms of biological role, an essential GTPase which binds GTP, GDP and possibly (p)ppGpp with moderate affinity, with high nucleotide exchange rates and a fairly low GTP hydrolysis rate. Plays a role in control of the cell cycle, stress response, ribosome biogenesis and in those bacteria that undergo differentiation, in morphogenesis control. The polypeptide is GTPase Obg (Clostridium botulinum (strain Langeland / NCTC 10281 / Type F)).